Here is a 121-residue protein sequence, read N- to C-terminus: Small ribosomal subunit protein uS12c (121 aa).

The protein belongs to the universal ribosomal protein uS12 family. As to quaternary structure, part of the 30S ribosomal subunit.

It localises to the plastid. It is found in the chloroplast. Functionally, with S4 and S5 plays an important role in translational accuracy. Located at the interface of the 30S and 50S subunits. In Bigelowiella natans (Pedinomonas minutissima), this protein is Small ribosomal subunit protein uS12c (rps12).